The chain runs to 444 residues: DNA primase DnaG (444 aa).

Positions 173–250 (DAILIVEGRS…YVTRAPRGLE (78 aa)) constitute a Toprim domain. 3 residues coordinate Mg(2+): Glu-179, Asp-221, and Asp-223. The interval 302–354 (VTSSVNKTDKYSQKNESKQFKQQKNENKQVKDNSKEKTQKSTEKHNETEETHL) is disordered. Residues 308 to 354 (KTDKYSQKNESKQFKQQKNENKQVKDNSKEKTQKSTEKHNETEETHL) are compositionally biased toward basic and acidic residues.

It belongs to the archaeal DnaG primase family. In terms of assembly, forms a ternary complex with MCM helicase and DNA. Component of the archaeal exosome complex. The cofactor is Mg(2+).

The enzyme catalyses ssDNA + n NTP = ssDNA/pppN(pN)n-1 hybrid + (n-1) diphosphate.. RNA polymerase that catalyzes the synthesis of short RNA molecules used as primers for DNA polymerase during DNA replication. Also part of the exosome, which is a complex involved in RNA degradation. Acts as a poly(A)-binding protein that enhances the interaction between heteromeric, adenine-rich transcripts and the exosome. This chain is DNA primase DnaG, found in Methanosphaera stadtmanae (strain ATCC 43021 / DSM 3091 / JCM 11832 / MCB-3).